The sequence spans 78 residues: Acyl carrier protein (78 aa).

A Carrier domain is found at serine 2–asparagine 77. Serine 37 carries the O-(pantetheine 4'-phosphoryl)serine modification.

This sequence belongs to the acyl carrier protein (ACP) family. In terms of processing, 4'-phosphopantetheine is transferred from CoA to a specific serine of apo-ACP by AcpS. This modification is essential for activity because fatty acids are bound in thioester linkage to the sulfhydryl of the prosthetic group.

Its subcellular location is the cytoplasm. It functions in the pathway lipid metabolism; fatty acid biosynthesis. Functionally, carrier of the growing fatty acid chain in fatty acid biosynthesis. In Edwardsiella ictaluri (strain 93-146), this protein is Acyl carrier protein.